Here is a 117-residue protein sequence, read N- to C-terminus: Ig heavy chain V region 1-62-3 (117 aa).

The first 19 residues, 1–19 (MGWSCIMLFLAATATGVHF), serve as a signal peptide directing secretion. The tract at residues 20-49 (QVQLQQPGAELVKPGASVKLSSKASGYTFT) is framework-1. Positions 50–54 (SYWMH) are complementarity-determining-1. The interval 55–68 (WVKQRPGRGLEWIG) is framework-2. The interval 69-85 (RIDPNSGGTKYNEKFKS) is complementarity-determining-2. A framework-3 region spans residues 86 to 117 (KATLTVDKPSSTAYMQLSSLTSEDSAVYYCAR).

In Mus musculus (Mouse), this protein is Ig heavy chain V region 1-62-3 (Ighv1-62-3).